We begin with the raw amino-acid sequence, 417 residues long: C4-dicarboxylate transport protein (417 aa).

8 helical membrane-spanning segments follow: residues 4–26 (IYVQVLIAIVLGVLVGAIWPQIG), 41–60 (KLVIAPVIFCTVAGGIARMG), 72–94 (ALIYFEVVSTLALVIGLVVGRLI), 137–159 (FIGAFADGNLLQVLVIAILTGFA), 180–202 (LFFGIIHIVVRLAPIGAFGAMGF), 217–239 (ALVATFYVTSLLFVLVVLGGIAW), 285–307 (VVGLVIPTGYSFNLDGTNIYMTL), and 347–369 (FITLAATLAVVPDIPIAALAILV).

The protein belongs to the dicarboxylate/amino acid:cation symporter (DAACS) (TC 2.A.23) family.

The protein resides in the cell inner membrane. In terms of biological role, responsible for the transport of dicarboxylates such as succinate, fumarate, and malate from the periplasm across the membrane. In Caulobacter vibrioides (strain ATCC 19089 / CIP 103742 / CB 15) (Caulobacter crescentus), this protein is C4-dicarboxylate transport protein.